We begin with the raw amino-acid sequence, 379 residues long: Mannitol-1-phosphate 5-dehydrogenase (379 aa).

NAD(+) is bound at residue 3 to 14 (ALHFGAGNIGRG).

Belongs to the mannitol dehydrogenase family.

The enzyme catalyses D-mannitol 1-phosphate + NAD(+) = beta-D-fructose 6-phosphate + NADH + H(+). The polypeptide is Mannitol-1-phosphate 5-dehydrogenase (Bacillus licheniformis (strain ATCC 14580 / DSM 13 / JCM 2505 / CCUG 7422 / NBRC 12200 / NCIMB 9375 / NCTC 10341 / NRRL NRS-1264 / Gibson 46)).